The primary structure comprises 358 residues: DNA replication and repair protein RecF (358 aa).

An ATP-binding site is contributed by 33–40 (GENGAGKT).

Belongs to the RecF family.

It localises to the cytoplasm. The RecF protein is involved in DNA metabolism; it is required for DNA replication and normal SOS inducibility. RecF binds preferentially to single-stranded, linear DNA. It also seems to bind ATP. In Deinococcus geothermalis (strain DSM 11300 / CIP 105573 / AG-3a), this protein is DNA replication and repair protein RecF.